A 134-amino-acid chain; its full sequence is ATP synthase epsilon chain (134 aa).

It belongs to the ATPase epsilon chain family. As to quaternary structure, F-type ATPases have 2 components, CF(1) - the catalytic core - and CF(0) - the membrane proton channel. CF(1) has five subunits: alpha(3), beta(3), gamma(1), delta(1), epsilon(1). CF(0) has three main subunits: a, b and c.

The protein localises to the cell membrane. In terms of biological role, produces ATP from ADP in the presence of a proton gradient across the membrane. In Clostridium botulinum (strain Alaska E43 / Type E3), this protein is ATP synthase epsilon chain.